The following is a 606-amino-acid chain: MRRQLSFHESTKRSLKKKKIRKIEKPSLVSKTSRDKNASITDIHEEDIEAFSDEENKIVHLNNLKEDRFQLWFEKYIPQKAADLAVHKSKISAIKQWMLTDSLESRLLLICGPSGCGKSTAVQVLAKELGYSLIEWLNPMNLKEPSNQESDTLSLTEKFSRFMSLCETYPELELMDSNNIQKRGKNAQGKKKFIFLDEIPHLSKFNGSLDAFRNVIRTALTSRGAFSIIMVLTEIQLNNLEGINSQDRNSFNSVQIMGNDLLQDPRVTVLQFNPIAPTYMKKCLGSILRKEGVPKSPKLLSLVENICSASEGDLRSAINSLQLSISQSFEKKGTKNIREVKEGKGKGNDFSLEAAQVLERLSKSDSEAYARFKNYKSAYIPKSDKNENSFFKKDVGLGMMHAIGKVVWNKREGDDEVLKASSQQTGNSERIKGVKVSKSQENKNCISLKSDQRERMLNVDQCFTSKRRSLVDIESTINQSGLSGSVFRYGLFENYVDSCVTTDEAFNVCDLLSISDCLSHDFPYSYTGDEISTWFSVQGTLFYLPSPVPRKWRQLRFQQWNNEGIVRGIFDDYMVIYGKRSVSDPVIEAHEDQVLEDIDDPIEDED.

Positions 1–21 are disordered; the sequence is MRRQLSFHESTKRSLKKKKIR. Position 112 to 119 (112 to 119) interacts with ATP; sequence GPSGCGKS.

Belongs to the rad17/RAD24 family. As to quaternary structure, interacts with mug40.

The protein resides in the nucleus. Its function is as follows. Participates in checkpoint pathways arrest of the cell cycle. A mechanism that allows the DNA repair pathways to act to restore the integrity of the DNA prior to DNA synthesis or separation of the replicated chromosomes. The sequence is that of Checkpoint protein rad17 (rad17) from Schizosaccharomyces pombe (strain 972 / ATCC 24843) (Fission yeast).